Reading from the N-terminus, the 887-residue chain is Alanine--tRNA ligase (887 aa).

His565, His569, Cys674, and His678 together coordinate Zn(2+).

The protein belongs to the class-II aminoacyl-tRNA synthetase family. Zn(2+) serves as cofactor.

It is found in the cytoplasm. It catalyses the reaction tRNA(Ala) + L-alanine + ATP = L-alanyl-tRNA(Ala) + AMP + diphosphate. Catalyzes the attachment of alanine to tRNA(Ala) in a two-step reaction: alanine is first activated by ATP to form Ala-AMP and then transferred to the acceptor end of tRNA(Ala). Also edits incorrectly charged Ser-tRNA(Ala) and Gly-tRNA(Ala) via its editing domain. The polypeptide is Alanine--tRNA ligase (Erythrobacter litoralis (strain HTCC2594)).